A 430-amino-acid polypeptide reads, in one-letter code: UDP-N-acetylmuramoylalanine--D-glutamate ligase (430 aa).

109–115 (GTDGKST) is a binding site for ATP.

The protein belongs to the MurCDEF family.

The protein localises to the cytoplasm. It catalyses the reaction UDP-N-acetyl-alpha-D-muramoyl-L-alanine + D-glutamate + ATP = UDP-N-acetyl-alpha-D-muramoyl-L-alanyl-D-glutamate + ADP + phosphate + H(+). It participates in cell wall biogenesis; peptidoglycan biosynthesis. Its function is as follows. Cell wall formation. Catalyzes the addition of glutamate to the nucleotide precursor UDP-N-acetylmuramoyl-L-alanine (UMA). This is UDP-N-acetylmuramoylalanine--D-glutamate ligase from Thermotoga petrophila (strain ATCC BAA-488 / DSM 13995 / JCM 10881 / RKU-1).